A 31-amino-acid polypeptide reads, in one-letter code: Cytochrome b6-f complex subunit 6 (31 aa).

Residues 3–23 traverse the membrane as a helical segment; that stretch reads ILISYFCFLLVFFLFTLILFI.

The protein belongs to the PetL family. The 4 large subunits of the cytochrome b6-f complex are cytochrome b6, subunit IV (17 kDa polypeptide, PetD), cytochrome f and the Rieske protein, while the 4 small subunits are PetG, PetL, PetM and PetN. The complex functions as a dimer.

Its subcellular location is the plastid. It is found in the chloroplast thylakoid membrane. Functionally, component of the cytochrome b6-f complex, which mediates electron transfer between photosystem II (PSII) and photosystem I (PSI), cyclic electron flow around PSI, and state transitions. PetL is important for photoautotrophic growth as well as for electron transfer efficiency and stability of the cytochrome b6-f complex. The chain is Cytochrome b6-f complex subunit 6 from Welwitschia mirabilis (Tree tumbo).